The primary structure comprises 182 residues: uncharacterized protein (182 aa).

The signal sequence occupies residues 1–29 (MKKLLKKLVVLFLSSLVIIFNVWYFIICA). A helical membrane pass occupies residues 152–174 (WNLYFWTAASYNAVIFVFVLVIV).

It localises to the membrane. This is an uncharacterized protein from Bacillus subtilis (strain 168).